Consider the following 360-residue polypeptide: Peptide chain release factor 1 (360 aa).

Gln-237 is subject to N5-methylglutamine.

It belongs to the prokaryotic/mitochondrial release factor family. Post-translationally, methylated by PrmC. Methylation increases the termination efficiency of RF1.

It localises to the cytoplasm. Functionally, peptide chain release factor 1 directs the termination of translation in response to the peptide chain termination codons UAG and UAA. In Pseudomonas aeruginosa (strain LESB58), this protein is Peptide chain release factor 1.